Here is a 394-residue protein sequence, read N- to C-terminus: NAD(P)H-quinone oxidoreductase subunit H (394 aa).

This sequence belongs to the complex I 49 kDa subunit family. In terms of assembly, NDH-1 can be composed of about 15 different subunits; different subcomplexes with different compositions have been identified which probably have different functions.

It is found in the cellular thylakoid membrane. It catalyses the reaction a plastoquinone + NADH + (n+1) H(+)(in) = a plastoquinol + NAD(+) + n H(+)(out). The enzyme catalyses a plastoquinone + NADPH + (n+1) H(+)(in) = a plastoquinol + NADP(+) + n H(+)(out). In terms of biological role, NDH-1 shuttles electrons from an unknown electron donor, via FMN and iron-sulfur (Fe-S) centers, to quinones in the respiratory and/or the photosynthetic chain. The immediate electron acceptor for the enzyme in this species is believed to be plastoquinone. Couples the redox reaction to proton translocation, and thus conserves the redox energy in a proton gradient. Cyanobacterial NDH-1 also plays a role in inorganic carbon-concentration. In Microcystis aeruginosa (strain NIES-843 / IAM M-2473), this protein is NAD(P)H-quinone oxidoreductase subunit H.